The chain runs to 341 residues: DnaJ homolog subfamily C member 22 (341 aa).

The region spanning 4-50 (GLLMTYALWAFGGPVGLHHLYLGRDSHALLWMLTLGGGGLGWLWEFW) is the TM2 domain. 7 helical membrane passes run 5 to 25 (LLMTYALWAFGGPVGLHHLYL), 30 to 50 (HALLWMLTLGGGGLGWLWEFW), 81 to 101 (FASQMVVGVYFGLVALISLSS), 105 to 125 (FYIVGLPLAVGLGVLLVAAVG), 135 to 155 (LGAAFLTSPVFYGRPIAILPI), 185 to 205 (VGLAYLAFTGPLAYSTLYNTA), and 232 to 252 (VESVLLLPCRIWWLLVGAPGF). The J domain maps to 277–341 (LAHQVLGIPE…QPKKPRASWR (65 aa)).

Its subcellular location is the membrane. May function as a co-chaperone. The polypeptide is DnaJ homolog subfamily C member 22 (Dnajc22) (Rattus norvegicus (Rat)).